The chain runs to 261 residues: Receptor expression-enhancing protein 4 (261 aa).

Helical transmembrane passes span 1-21 and 35-55; these read MVSWIISRAVVLVFGLLYPAY and YVRWMMYWIVFALFMTVETFT. The segment at 177–261 is disordered; sequence ELHRRPIGYP…KKPAQSEPEN (85 aa). The segment covering 191 to 202 has biased composition (basic and acidic residues); that stretch reads ADSDSMDERWSD.

The protein belongs to the DP1 family. Interacts with microtubules. In terms of tissue distribution, during gastrulation, expressed on the dorsal side of the embryo and then in the neural plate and neural tube. At tailbud stages, expressed in the somites. Expressed in the neural tube later in development.

The protein localises to the endoplasmic reticulum membrane. Functionally, microtubule-binding protein required to ensure proper cell division and nuclear envelope reassembly by sequestering the endoplasmic reticulum away from chromosomes during mitosis. Probably acts by clearing the endoplasmic reticulum membrane from metaphase chromosomes. May play a role in the maintenance of both the nervous system and the musculature. This is Receptor expression-enhancing protein 4 (reep4) from Xenopus tropicalis (Western clawed frog).